The chain runs to 199 residues: dITP/XTP pyrophosphatase (199 aa).

8-13 contributes to the substrate binding site; the sequence is SGNAGK. Residue Asp69 is the Proton acceptor of the active site. Asp69 serves as a coordination point for Mg(2+). Residues Ser70, 154 to 157, Lys177, and 182 to 183 contribute to the substrate site; these read FGYN and HR.

It belongs to the HAM1 NTPase family. As to quaternary structure, homodimer. Requires Mg(2+) as cofactor.

It catalyses the reaction XTP + H2O = XMP + diphosphate + H(+). It carries out the reaction dITP + H2O = dIMP + diphosphate + H(+). The enzyme catalyses ITP + H2O = IMP + diphosphate + H(+). In terms of biological role, pyrophosphatase that catalyzes the hydrolysis of nucleoside triphosphates to their monophosphate derivatives, with a high preference for the non-canonical purine nucleotides XTP (xanthosine triphosphate), dITP (deoxyinosine triphosphate) and ITP. Seems to function as a house-cleaning enzyme that removes non-canonical purine nucleotides from the nucleotide pool, thus preventing their incorporation into DNA/RNA and avoiding chromosomal lesions. This chain is dITP/XTP pyrophosphatase, found in Xanthomonas campestris pv. campestris (strain 8004).